Consider the following 458-residue polypeptide: MALWGGRFTQAADQRFKQFNDSLRFDYRLAEQDIVGSVAWSKALVTVGVLTADEQRQLEEALNVLLEEVRANPQQILQSDAEDIHSWVEGKLIDKVGQLGKKLHTGRSRNDQVATDLKLWCKETVRELLTANRQLQSALVETAQANQDAVMPGYTHLQRAQPVTFAHWCLAYVEMLARDESRLQDTLKRLDVSPLGCGALAGTAYEIDREQLAGWLGFTSATRNSLDSVSDRDHVLELLSDAAIGMVHLSRFAEDLIFFNSGEAGFVELSDRVTSGSSLMPQKKNPDALELIRGKCGRVQGALTGMMMTLKGLPLAYNKDMQEDKEGLFDALDTWLDCLHMAALVLDGIQVKRPRCQDAAQQGYANATELADYLVAKGVPFREAHHIVGEAVVEAIRQGKPLEALPLADLQKFSRVIGDDVYPILSLQSCLDKRAAKGGVSPQQVAQAINDAKARLAL.

The protein belongs to the lyase 1 family. Argininosuccinate lyase subfamily.

Its subcellular location is the cytoplasm. It carries out the reaction 2-(N(omega)-L-arginino)succinate = fumarate + L-arginine. Its pathway is amino-acid biosynthesis; L-arginine biosynthesis; L-arginine from L-ornithine and carbamoyl phosphate: step 3/3. The protein is Argininosuccinate lyase of Salmonella choleraesuis (strain SC-B67).